The primary structure comprises 126 residues: Bactofilin BacO (126 aa).

It belongs to the bactofilin family. In terms of assembly, interacts with BacN and probably also BacP, the 3 proteins colocalize as an extended structure. Interacts with PadC.

Its subcellular location is the cytoplasm. It is found in the cytoskeleton. Its function is as follows. A non-essential component of the chromosome segregation machinery. Positions the ParA-ParB-parS chromosome segregation machinery within the cell; BacP seems to be the most important bactofilin in this process. Forms a heteropolymeric, subpolar scaffold in the cell; BacP probably forms the core, BacO contributes to position and integrity while BacN does not seem to contribute to assembly. This Myxococcus xanthus (strain DK1622) protein is Bactofilin BacO.